An 81-amino-acid chain; its full sequence is Cytochrome b559 subunit alpha (81 aa).

The helical transmembrane segment at Val-21 to Trp-35 threads the bilayer. His-23 is a binding site for heme.

It belongs to the PsbE/PsbF family. In terms of assembly, heterodimer of an alpha subunit and a beta subunit. PSII is composed of 1 copy each of membrane proteins PsbA, PsbB, PsbC, PsbD, PsbE, PsbF, PsbH, PsbI, PsbJ, PsbK, PsbL, PsbM, PsbT, PsbX, PsbY, PsbZ, Psb30/Ycf12, peripheral proteins PsbO, CyanoQ (PsbQ), PsbU, PsbV and a large number of cofactors. It forms dimeric complexes. Heme b is required as a cofactor.

It is found in the cellular thylakoid membrane. Its function is as follows. This b-type cytochrome is tightly associated with the reaction center of photosystem II (PSII). PSII is a light-driven water:plastoquinone oxidoreductase that uses light energy to abstract electrons from H(2)O, generating O(2) and a proton gradient subsequently used for ATP formation. It consists of a core antenna complex that captures photons, and an electron transfer chain that converts photonic excitation into a charge separation. In Gloeothece citriformis (strain PCC 7424) (Cyanothece sp. (strain PCC 7424)), this protein is Cytochrome b559 subunit alpha.